Consider the following 359-residue polypeptide: DNA replication and repair protein RecF (359 aa).

ATP is bound at residue 30–37; it reads GQNAQGKT.

It belongs to the RecF family.

Its subcellular location is the cytoplasm. Its function is as follows. The RecF protein is involved in DNA metabolism; it is required for DNA replication and normal SOS inducibility. RecF binds preferentially to single-stranded, linear DNA. It also seems to bind ATP. The chain is DNA replication and repair protein RecF from Lactococcus lactis subsp. cremoris (strain MG1363).